Consider the following 285-residue polypeptide: Non-structural protein ORF4b (285 aa).

Its subcellular location is the host nucleus. The protein resides in the host nucleolus. It localises to the host cytoplasm. Functionally, plays a role in the inhibition of host innate immunity by inhibiting the interaction between host IKBKE and MAVS. In turn, this inhibition prevents the production of host interferon beta. Additionally, may also interfere with host antiviral response within the nucleus. The polypeptide is Non-structural protein ORF4b (ORF4b) (Tylonycteris pachypus (Lesser bamboo bat)).